Reading from the N-terminus, the 539-residue chain is MLPSTISYRIYKNALFFAALFGAVQAQKVGTSKAEVHPSMAWQTCAADGTCTTKNGKVVIDANWRWVHDVKGYTNCYTGNTWNAELCPDNESCAENCALEGADYAATYGATTSGNALSLKFVTQSQQKNIGSRLYMMKDDNTYETFKLLNQEFTFDVDVSNLPCGLNGALYFVSMDADGGLSRYTGNEAGAKYGTGYCDSQCPRDLKFINGLANVEGWTPSSSDANAGNGGHGSCCAEMDIWEANSISTAYTPHPCDTPGQAMCNGDSCGGTYSSDRYGGTCDPDGCDFNSYRQGNKSFYGPGMTVDTKKKMTVVTQFLTNDGTATGTLSEIKRFYVQDGKVIANSESTWPNLGGNSLTNDFCKAQKTVFGDMDTFSKHGGMEGMGAALAEGMVLVMSLWDDHNSNMLWLDSNSPTTGTSTTPGVARGSCDISSGDPKDLEANHPDASVVYSNIKVGPIGSTFNSGGSNPGGSTTTTKPATSTTTTKATTTATTNTTGPTGTGVAQPWAQCGGIGYSGPTQCAAPYTCTKQNDYYSQCL.

An N-terminal signal peptide occupies residues 1–26 (MLPSTISYRIYKNALFFAALFGAVQA). Positions 27-461 (QKVGTSKAEV…SNIKVGPIGS (435 aa)) are catalytic. Asparagine 90 is a glycosylation site (N-linked (GlcNAc...) asparagine). Glutamate 238 (nucleophile) is an active-site residue. Glutamate 243 functions as the Proton donor in the catalytic mechanism. N-linked (GlcNAc...) asparagine glycans are attached at residues asparagine 296 and asparagine 495. Residues 462-503 (TFNSGGSNPGGSTTTTKPATSTTTTKATTTATTNTTGPTGTG) form a thr-rich linker region. Residues 462–503 (TFNSGGSNPGGSTTTTKPATSTTTTKATTTATTNTTGPTGTG) show a composition bias toward low complexity. Residues 462 to 504 (TFNSGGSNPGGSTTTTKPATSTTTTKATTTATTNTTGPTGTGV) form a disordered region. A CBM1 domain is found at 503–539 (GVAQPWAQCGGIGYSGPTQCAAPYTCTKQNDYYSQCL). 2 disulfide bridges follow: cysteine 511/cysteine 528 and cysteine 522/cysteine 538.

This sequence belongs to the glycosyl hydrolase 7 (cellulase C) family.

It is found in the secreted. The enzyme catalyses Hydrolysis of (1-&gt;4)-beta-D-glucosidic linkages in cellulose and cellotetraose, releasing cellobiose from the non-reducing ends of the chains.. Functionally, the biological conversion of cellulose to glucose generally requires three types of hydrolytic enzymes: (1) Endoglucanases which cut internal beta-1,4-glucosidic bonds; (2) Exocellobiohydrolases that cut the disaccharide cellobiose from the non-reducing end of the cellulose polymer chain; (3) Beta-1,4-glucosidases which hydrolyze the cellobiose and other short cello-oligosaccharides to glucose. The chain is Probable 1,4-beta-D-glucan cellobiohydrolase B (cbhB) from Aspergillus clavatus (strain ATCC 1007 / CBS 513.65 / DSM 816 / NCTC 3887 / NRRL 1 / QM 1276 / 107).